We begin with the raw amino-acid sequence, 253 residues long: uncharacterized protein (253 aa).

A run of 6 helical transmembrane segments spans residues 17–37 (MWLLVWICGIIFLLGTGHIIA), 46–66 (IFGFFVAVAFFLLFLSPVFVF), 93–113 (LAASLLYQFVIQLALTAYGIW), 139–159 (MYGLISSLDMSVTVIVFWTVF), 172–192 (AMVLLVAMWLFFDEYIISPLV), and 222–242 (IHLSVLGFPIAIVITFLLLIM).

The protein localises to the cell membrane. This is an uncharacterized protein from Bacillus subtilis (strain 168).